A 247-amino-acid chain; its full sequence is Probable transcriptional regulatory protein TDE_1487 (247 aa).

It belongs to the TACO1 family.

The protein localises to the cytoplasm. This Treponema denticola (strain ATCC 35405 / DSM 14222 / CIP 103919 / JCM 8153 / KCTC 15104) protein is Probable transcriptional regulatory protein TDE_1487.